Consider the following 294-residue polypeptide: MNNATKRVVVPALEEILYEPIKVLDHGFIRVIDYMGDDSAIVQAARVSYGKGTKQLNQDKGLINYLLRHYHTTPFEMCDIKFHIKLPIFIARQWIRHRTASVNEYSARYSILGNEFYLPEPQNIAPQSSTNKQCRESDSLPKEVAEKVLNILEEDARNCYKHYTKLMNTDEEGNIIDDNNTGIARELARMNLTLNYYTEWYWKINLHNLLHFLRLRADPHAQYEIRVYAEKMLDIVKAWVPFTYEAFEEYRMCGANISRKGLEVIKKMISGEKVTHETSGMTKREWEELTKILK.

Positions 27 to 250 constitute a ThyX domain; it reads GFIRVIDYMG…PFTYEAFEEY (224 aa). FAD is bound by residues Thr-73, 96-98, and Glu-104; that span reads RHR. Residues 93 to 96, 104 to 108, and Arg-189 contribute to the dUMP site; these read QWIR and EYSAR. The short motif at 96–106 is the ThyX motif element; sequence RHRTASVNEYS. FAD-binding positions include 205-207 and His-211; that span reads NLH. Arg-216 contributes to the dUMP binding site. Arg-216 serves as the catalytic Involved in ionization of N3 of dUMP, leading to its activation.

The protein belongs to the thymidylate synthase ThyX family. As to quaternary structure, homotetramer. The cofactor is FAD.

The catalysed reaction is dUMP + (6R)-5,10-methylene-5,6,7,8-tetrahydrofolate + NADPH + H(+) = dTMP + (6S)-5,6,7,8-tetrahydrofolate + NADP(+). Its pathway is pyrimidine metabolism; dTTP biosynthesis. In terms of biological role, catalyzes the reductive methylation of 2'-deoxyuridine-5'-monophosphate (dUMP) to 2'-deoxythymidine-5'-monophosphate (dTMP) while utilizing 5,10-methylenetetrahydrofolate (mTHF) as the methyl donor, and NADPH and FADH(2) as the reductant. The protein is Flavin-dependent thymidylate synthase of Rickettsia bellii (strain RML369-C).